Consider the following 618-residue polypeptide: 1-deoxy-D-xylulose-5-phosphate synthase (618 aa).

Thiamine diphosphate contacts are provided by residues H70 and 111-113; that span reads GHS. D142 contributes to the Mg(2+) binding site. Thiamine diphosphate-binding positions include 143–144, N171, Y278, and E360; that span reads GS. N171 is a binding site for Mg(2+).

Belongs to the transketolase family. DXPS subfamily. As to quaternary structure, homodimer. Mg(2+) serves as cofactor. The cofactor is thiamine diphosphate.

It carries out the reaction D-glyceraldehyde 3-phosphate + pyruvate + H(+) = 1-deoxy-D-xylulose 5-phosphate + CO2. Its pathway is metabolic intermediate biosynthesis; 1-deoxy-D-xylulose 5-phosphate biosynthesis; 1-deoxy-D-xylulose 5-phosphate from D-glyceraldehyde 3-phosphate and pyruvate: step 1/1. Catalyzes the acyloin condensation reaction between C atoms 2 and 3 of pyruvate and glyceraldehyde 3-phosphate to yield 1-deoxy-D-xylulose-5-phosphate (DXP). In Helicobacter pylori (strain J99 / ATCC 700824) (Campylobacter pylori J99), this protein is 1-deoxy-D-xylulose-5-phosphate synthase.